The primary structure comprises 179 residues: Large ribosomal subunit protein uL5 (179 aa).

Belongs to the universal ribosomal protein uL5 family. Part of the 50S ribosomal subunit; part of the 5S rRNA/L5/L18/L25 subcomplex. Contacts the 5S rRNA and the P site tRNA. Forms a bridge to the 30S subunit in the 70S ribosome.

This is one of the proteins that bind and probably mediate the attachment of the 5S RNA into the large ribosomal subunit, where it forms part of the central protuberance. In the 70S ribosome it contacts protein S13 of the 30S subunit (bridge B1b), connecting the 2 subunits; this bridge is implicated in subunit movement. Contacts the P site tRNA; the 5S rRNA and some of its associated proteins might help stabilize positioning of ribosome-bound tRNAs. This chain is Large ribosomal subunit protein uL5, found in Bacillus anthracis (strain A0248).